The sequence spans 435 residues: Probable tRNA pseudouridine synthase D (435 aa).

Asp95 acts as the Nucleophile in catalysis. The region spanning 170 to 396 (GVPNYFGTQR…SSGTRRAVLV (227 aa)) is the TRUD domain.

It belongs to the pseudouridine synthase TruD family.

The enzyme catalyses uridine(13) in tRNA = pseudouridine(13) in tRNA. Its function is as follows. Could be responsible for synthesis of pseudouridine from uracil-13 in transfer RNAs. The sequence is that of Probable tRNA pseudouridine synthase D from Natronomonas pharaonis (strain ATCC 35678 / DSM 2160 / CIP 103997 / JCM 8858 / NBRC 14720 / NCIMB 2260 / Gabara) (Halobacterium pharaonis).